Here is a 259-residue protein sequence, read N- to C-terminus: Bidirectional sugar transporter SWEET4 (259 aa).

Residues 1 to 10 (MVSPDTIRTA) lie on the Extracellular side of the membrane. Residues 10-94 (AIGVVGNGTA…TYIALFLAFS (85 aa)) enclose the MtN3/slv 1 domain. A helical membrane pass occupies residues 11–31 (IGVVGNGTALVLFLSPVPTFI). The Cytoplasmic segment spans residues 32 to 44 (RIWKKGSVEQYSA). The chain crosses the membrane as a helical span at residues 45–65 (VPYVATLLNCMMWVLYGLPAV). Residues 66–77 (HPHSMLVITING) lie on the Extracellular side of the membrane. N76 is a glycosylation site (N-linked (GlcNAc...) asparagine). Residues 78 to 98 (TGMAIELTYIALFLAFSLGAV) form a helical membrane-spanning segment. At 99-101 (RRR) the chain is on the cytoplasmic side. The helical transmembrane segment at 102–122 (VLLLLAAEVAFVAAVAALVLN) threads the bilayer. Over 123–131 (LAHTHERRS) the chain is Extracellular. Residues 132–152 (MIVGILCVLFGTGMYAAPLSV) traverse the membrane as a helical segment. The region spanning 133-217 (IVGILCVLFG…ILYAIYYKST (85 aa)) is the MtN3/slv 2 domain. Topologically, residues 153-165 (MKMVIQTKSVEYM) are cytoplasmic. Residues 166 to 186 (PLFLSLASLVNGICWTAYALI) form a helical membrane-spanning segment. The Extracellular portion of the chain corresponds to 187–191 (RFDLY). Residues 192–212 (ITIPNGLGVMFAVAQLILYAI) traverse the membrane as a helical segment. At 213 to 259 (YYKSTQQIIEARKRKEADHVAMTDVVVDSAKNNPSSGAAAAAANGRY) the chain is on the cytoplasmic side.

This sequence belongs to the SWEET sugar transporter family. As to quaternary structure, forms homooligomers and/or heterooligomers.

The protein localises to the cell membrane. Its function is as follows. Mediates both low-affinity uptake and efflux of sugar across the plasma membrane. This is Bidirectional sugar transporter SWEET4 (SWEET4) from Oryza sativa subsp. indica (Rice).